Reading from the N-terminus, the 493-residue chain is Uridine 5'-monophosphate synthase (493 aa).

The OPRTase stretch occupies residues 1–207 (MVAQNSDKMR…VAKYIAAVQI (207 aa)). Residues 208-233 (NSDGTFVGGDKGDVVRANDLQRTKLT) are domain linker. An OMPdecase region spans residues 234–493 (YENRANLAKS…WAAYQDRVAK (260 aa)). Lys320 is a catalytic residue.

This sequence in the N-terminal section; belongs to the purine/pyrimidine phosphoribosyltransferase family. It in the C-terminal section; belongs to the OMP decarboxylase family.

The catalysed reaction is orotidine 5'-phosphate + diphosphate = orotate + 5-phospho-alpha-D-ribose 1-diphosphate. The enzyme catalyses orotidine 5'-phosphate + H(+) = UMP + CO2. It functions in the pathway pyrimidine metabolism; UMP biosynthesis via de novo pathway; UMP from orotate: step 1/2. Its pathway is pyrimidine metabolism; UMP biosynthesis via de novo pathway; UMP from orotate: step 2/2. The protein is Uridine 5'-monophosphate synthase (r-l) of Drosophila melanogaster (Fruit fly).